A 619-amino-acid polypeptide reads, in one-letter code: ATP-dependent RNA helicase dbp9 (619 aa).

The disordered stretch occupies residues 1-30 (MKRKLDANDVPSTEVAEEKETKDADNTDFE). The span at 16-25 (AEEKETKDAD) shows a compositional bias: basic and acidic residues. The Q motif motif lies at 27–55 (TDFESLNLDPRLRQALIREQFTKPTPVQS). One can recognise a Helicase ATP-binding domain in the interval 58–236 (IPLALEGKDI…GLFCRSPVIL (179 aa)). Position 71–78 (71–78 (AKTGSGKT)) interacts with ATP. Residues 184–187 (DEAD) carry the DEAD box motif. One can recognise a Helicase C-terminal domain in the interval 247 to 484 (GISQFVVRCA…EVKPYHFEMK (238 aa)). Disordered stretches follow at residues 339-390 (SRTS…GKAK) and 582-619 (GDNR…RGRK). Positions 345-362 (KSKEATDGDDEAKDKMGS) are enriched in basic and acidic residues. Residues 587-604 (RKAREKNRGKGKGRKPSG) show a composition bias toward basic residues.

It belongs to the DEAD box helicase family. DDX56/DBP9 subfamily.

The protein localises to the nucleus. It is found in the nucleolus. It catalyses the reaction ATP + H2O = ADP + phosphate + H(+). Functionally, ATP-binding RNA helicase involved in the biogenesis of 60S ribosomal subunits and is required for the normal formation of 25S and 5.8S rRNAs. The chain is ATP-dependent RNA helicase dbp9 (dbp9) from Neosartorya fischeri (strain ATCC 1020 / DSM 3700 / CBS 544.65 / FGSC A1164 / JCM 1740 / NRRL 181 / WB 181) (Aspergillus fischerianus).